The following is a 362-amino-acid chain: Tyrosine-protein kinase SRK2 (362 aa).

In terms of domain architecture, SH2 spans 1 to 70 (TFLVRESESK…GLCVNLRQPC (70 aa)). Residues 95–348 (ITLIRKLGAG…ALQWRLEDFF (254 aa)) enclose the Protein kinase domain. Residues 101–109 (LGAGQFGEV) and K123 each bind ATP. The active-site Proton acceptor is the D214.

This sequence belongs to the protein kinase superfamily. Tyr protein kinase family.

The protein localises to the cytoplasm. The catalysed reaction is L-tyrosyl-[protein] + ATP = O-phospho-L-tyrosyl-[protein] + ADP + H(+). The chain is Tyrosine-protein kinase SRK2 (SRK2) from Spongilla lacustris (Freshwater sponge).